We begin with the raw amino-acid sequence, 80 residues long: Pigment-dispersing hormone peptides (80 aa).

The signal sequence occupies residues 1 to 20; that stretch reads MANYITIAIIVGIVCGQALS. Residues 21-58 constitute a propeptide that is removed on maturation; sequence VEDVDRNLLELNLPYGRGLDSELQLARLMLAAPRFCHP. Position 78 is an alanine amide (alanine 78).

This sequence belongs to the arthropod PDH family. Expressed in the brain (at protein level).

It localises to the secreted. Functionally, neuropeptide PDF is the main transmitter regulating circadian locomotor rhythms. In Camponotus floridanus (Florida carpenter ant), this protein is Pigment-dispersing hormone peptides.